Reading from the N-terminus, the 329-residue chain is Diaminopimelate epimerase (329 aa).

Substrate-binding residues include asparagine 14 and asparagine 73. The active-site Proton donor is the cysteine 82. Residues 83–84 (GN), asparagine 170, asparagine 206, and 224–225 (ER) each bind substrate. Cysteine 233 acts as the Proton acceptor in catalysis. Substrate is bound at residue 234–235 (GT).

It belongs to the diaminopimelate epimerase family. In terms of assembly, homodimer.

The protein localises to the cytoplasm. The catalysed reaction is (2S,6S)-2,6-diaminopimelate = meso-2,6-diaminopimelate. It participates in amino-acid biosynthesis; L-lysine biosynthesis via DAP pathway; DL-2,6-diaminopimelate from LL-2,6-diaminopimelate: step 1/1. Catalyzes the stereoinversion of LL-2,6-diaminopimelate (L,L-DAP) to meso-diaminopimelate (meso-DAP), a precursor of L-lysine and an essential component of the bacterial peptidoglycan. This Listeria monocytogenes serotype 4a (strain HCC23) protein is Diaminopimelate epimerase.